A 313-amino-acid chain; its full sequence is Ribosomal RNA small subunit methyltransferase H (313 aa).

S-adenosyl-L-methionine-binding positions include 35-37, Asp55, Phe79, Asp100, and Gln107; that span reads GGH.

Belongs to the methyltransferase superfamily. RsmH family.

Its subcellular location is the cytoplasm. The catalysed reaction is cytidine(1402) in 16S rRNA + S-adenosyl-L-methionine = N(4)-methylcytidine(1402) in 16S rRNA + S-adenosyl-L-homocysteine + H(+). Its function is as follows. Specifically methylates the N4 position of cytidine in position 1402 (C1402) of 16S rRNA. This is Ribosomal RNA small subunit methyltransferase H from Burkholderia orbicola (strain MC0-3).